The chain runs to 95 residues: Co-chaperonin GroES (95 aa).

It belongs to the GroES chaperonin family. Heptamer of 7 subunits arranged in a ring. Interacts with the chaperonin GroEL.

It is found in the cytoplasm. Its function is as follows. Together with the chaperonin GroEL, plays an essential role in assisting protein folding. The GroEL-GroES system forms a nano-cage that allows encapsulation of the non-native substrate proteins and provides a physical environment optimized to promote and accelerate protein folding. GroES binds to the apical surface of the GroEL ring, thereby capping the opening of the GroEL channel. This is Co-chaperonin GroES from Glaesserella parasuis serovar 5 (strain SH0165) (Haemophilus parasuis).